We begin with the raw amino-acid sequence, 944 residues long: Protein unc-45 homolog A (944 aa).

The segment at M1–R25 is disordered. 3 TPR repeats span residues A21–P54, A58–D91, and V92–N125. Residue K70 is modified to N6-acetyllysine. K483 is modified (N6-acetyllysine).

Interacts with PGR isoforms A and B as well as with NR3C1 in the absence of ligand, and with HSP90AB1. Binding to HSP90AB1 involves 2 UNC45A monomers per HSP90AB1 dimer.

The protein localises to the cytoplasm. The protein resides in the perinuclear region. It is found in the nucleus. Its function is as follows. May act as co-chaperone for HSP90 (Potential). Prevents the stimulation of HSP90AB1 ATPase activity by AHSA1. Positive factor in promoting PGR function in the cell. May be necessary for proper folding of myosin (Potential). Necessary for normal cell proliferation. Necessary for normal myotube formation and myosin accumulation during muscle cell development. May play a role in erythropoiesis in stroma cells in the spleen. The protein is Protein unc-45 homolog A (Unc45a) of Rattus norvegicus (Rat).